Consider the following 403-residue polypeptide: Phosphopentomutase (403 aa).

Positions 13, 298, 303, 339, 340, and 351 each coordinate Mn(2+).

The protein belongs to the phosphopentomutase family. Mn(2+) serves as cofactor.

It is found in the cytoplasm. The catalysed reaction is 2-deoxy-alpha-D-ribose 1-phosphate = 2-deoxy-D-ribose 5-phosphate. It catalyses the reaction alpha-D-ribose 1-phosphate = D-ribose 5-phosphate. It participates in carbohydrate degradation; 2-deoxy-D-ribose 1-phosphate degradation; D-glyceraldehyde 3-phosphate and acetaldehyde from 2-deoxy-alpha-D-ribose 1-phosphate: step 1/2. Functionally, isomerase that catalyzes the conversion of deoxy-ribose 1-phosphate (dRib-1-P) and ribose 1-phosphate (Rib-1-P) to deoxy-ribose 5-phosphate (dRib-5-P) and ribose 5-phosphate (Rib-5-P), respectively. The chain is Phosphopentomutase from Streptococcus uberis (strain ATCC BAA-854 / 0140J).